Reading from the N-terminus, the 47-residue chain is Large ribosomal subunit protein bL34 (47 aa).

The segment at 1 to 28 (MAKGKRTFQPNNRRRARVHGFRTRMRTR) is disordered.

This sequence belongs to the bacterial ribosomal protein bL34 family.

The sequence is that of Large ribosomal subunit protein bL34 from Corynebacterium efficiens (strain DSM 44549 / YS-314 / AJ 12310 / JCM 11189 / NBRC 100395).